A 30-amino-acid polypeptide reads, in one-letter code: uncharacterized protein (30 aa).

Residues 9 to 26 form a helical membrane-spanning segment; the sequence is YRLVIIVLISVYYRYRFF.

It localises to the plastid. The protein localises to the chloroplast membrane. This is an uncharacterized protein from Marchantia polymorpha (Common liverwort).